The primary structure comprises 603 residues: UvrABC system protein C (603 aa).

A GIY-YIG domain is found at 15–92 (DQPGCYLMKD…IKKHDPRFNI (78 aa)). Positions 197–232 (KTVKNDLMKKMQEAAENMEFEKAGEFRDQINAIETT) constitute a UVR domain.

Belongs to the UvrC family. In terms of assembly, interacts with UvrB in an incision complex.

It is found in the cytoplasm. Functionally, the UvrABC repair system catalyzes the recognition and processing of DNA lesions. UvrC both incises the 5' and 3' sides of the lesion. The N-terminal half is responsible for the 3' incision and the C-terminal half is responsible for the 5' incision. The protein is UvrABC system protein C of Listeria monocytogenes serotype 4b (strain F2365).